Consider the following 164-residue polypeptide: Ribosome maturation factor RimM (164 aa).

The PRC barrel domain occupies 90–161 (KGSYFIADLI…TVTIKPLEIW (72 aa)).

Belongs to the RimM family. In terms of assembly, binds ribosomal protein uS19.

It is found in the cytoplasm. In terms of biological role, an accessory protein needed during the final step in the assembly of 30S ribosomal subunit, possibly for assembly of the head region. Essential for efficient processing of 16S rRNA. May be needed both before and after RbfA during the maturation of 16S rRNA. It has affinity for free ribosomal 30S subunits but not for 70S ribosomes. This Clostridium botulinum (strain ATCC 19397 / Type A) protein is Ribosome maturation factor RimM.